We begin with the raw amino-acid sequence, 390 residues long: 3-ketoacyl-CoA thiolase (390 aa).

Residue C95 is the Acyl-thioester intermediate of the active site. Active-site proton acceptor residues include H346 and C376.

Belongs to the thiolase-like superfamily. Thiolase family. In terms of assembly, heterotetramer of two alpha chains (FadB) and two beta chains (FadA).

It is found in the cytoplasm. It catalyses the reaction an acyl-CoA + acetyl-CoA = a 3-oxoacyl-CoA + CoA. The protein operates within lipid metabolism; fatty acid beta-oxidation. Its function is as follows. Catalyzes the final step of fatty acid oxidation in which acetyl-CoA is released and the CoA ester of a fatty acid two carbons shorter is formed. This Psychrobacter sp. (strain PRwf-1) protein is 3-ketoacyl-CoA thiolase.